Reading from the N-terminus, the 353-residue chain is Chorismate synthase (353 aa).

Arg48 is a binding site for NADP(+). Residues Arg125–Ser127, Asn238–Ala239, Gly278, Lys293–Ser297, and Arg319 each bind FMN.

It belongs to the chorismate synthase family. Homotetramer. The cofactor is FMNH2.

It catalyses the reaction 5-O-(1-carboxyvinyl)-3-phosphoshikimate = chorismate + phosphate. It functions in the pathway metabolic intermediate biosynthesis; chorismate biosynthesis; chorismate from D-erythrose 4-phosphate and phosphoenolpyruvate: step 7/7. In terms of biological role, catalyzes the anti-1,4-elimination of the C-3 phosphate and the C-6 proR hydrogen from 5-enolpyruvylshikimate-3-phosphate (EPSP) to yield chorismate, which is the branch point compound that serves as the starting substrate for the three terminal pathways of aromatic amino acid biosynthesis. This reaction introduces a second double bond into the aromatic ring system. This chain is Chorismate synthase, found in Buchnera aphidicola subsp. Cinara cedri (strain Cc).